The chain runs to 674 residues: Probable 3',5'-cyclic-AMP phosphodiesterase pde-4 (674 aa).

The tract at residues 1-82 is disordered; it reads MPRRRGSSSS…TSSASSYHPP (82 aa). A compositionally biased stretch (gly residues) spans 15–24; that stretch reads GGSGGGGGFG. The segment covering 39 to 62 has biased composition (low complexity); that stretch reads RTSSPSASSTSRTPPAALPPRTSA. The span at 66-78 shows a compositional bias: polar residues; it reads PGSNHKLTSSASS. Residues 328 to 660 form the PDEase domain; the sequence is HVPEYGVNCA…EWYQSRIPEE (333 aa). Histidine 407 functions as the Proton donor in the catalytic mechanism. The a divalent metal cation site is built by histidine 411, histidine 447, aspartate 448, and aspartate 565.

The protein belongs to the cyclic nucleotide phosphodiesterase family. It depends on a divalent metal cation as a cofactor. In terms of tissue distribution, expressed in dorsal D (DD) motor neurons and several other neurons at the L1 stage. Expression in DD neurons decreases gradually beginning in the late L1 stage. Highly expressed in adult ventral D (VD) motor neurons, but diminished in adult DD motor neurons.

The catalysed reaction is 3',5'-cyclic AMP + H2O = AMP + H(+). Its function is as follows. Hydrolyzes the second messenger 3',5'-cyclic AMP (cAMP), which is a key regulator of many important physiological processes. Antagonizes dorsal D (DD) motor neuron respecification by reducing levels of cAMP. The polypeptide is Probable 3',5'-cyclic-AMP phosphodiesterase pde-4 (pde-4) (Caenorhabditis elegans).